A 255-amino-acid polypeptide reads, in one-letter code: NAD kinase (255 aa).

The active-site Proton acceptor is Asp-44. Residues 44–45 (DG), His-49, 114–115 (NE), Asp-144, Ala-152, 155–160 (SAYNLS), and Gln-216 contribute to the NAD(+) site.

It belongs to the NAD kinase family. A divalent metal cation is required as a cofactor.

The protein localises to the cytoplasm. It carries out the reaction NAD(+) + ATP = ADP + NADP(+) + H(+). Its function is as follows. Involved in the regulation of the intracellular balance of NAD and NADP, and is a key enzyme in the biosynthesis of NADP. Catalyzes specifically the phosphorylation on 2'-hydroxyl of the adenosine moiety of NAD to yield NADP. The sequence is that of NAD kinase from Rickettsia rickettsii (strain Iowa).